We begin with the raw amino-acid sequence, 362 residues long: Glutamine synthetase (362 aa).

Positions 26–107 (LIAEYIWIDS…VLSECWNADG (82 aa)) constitute a GS beta-grasp domain. Positions 114–362 (HRHEAAKLME…METCFGAVSE (249 aa)) constitute a GS catalytic domain.

It belongs to the glutamine synthetase family. Homooctamer.

The protein resides in the cytoplasm. The enzyme catalyses L-glutamate + NH4(+) + ATP = L-glutamine + ADP + phosphate + H(+). This Neurospora crassa (strain ATCC 24698 / 74-OR23-1A / CBS 708.71 / DSM 1257 / FGSC 987) protein is Glutamine synthetase (gln-1).